The sequence spans 217 residues: MKIVIADDHAVVRTGFSMILNYQNDMEVVATAADGVEAYQKVMEYKPDVLLMDLSMPPGESGLIATSKIADSFPETKILILTMFDDEEYLFHVLRNGAKGYILKNAPDEQLLLAIRTVYKGETYVDMKLTTSLVNEFVSNSNQDTANTTDPFKILSKRELEILPLIAKGYGNKEIAEKLFVSVKTVEAHKTHIMTKLGLKSKPELVEYALKKKLLEF.

The 118-residue stretch at 2-119 (KIVIADDHAV…QLLLAIRTVY (118 aa)) folds into the Response regulatory domain. Aspartate 53 bears the 4-aspartylphosphate mark. An HTH luxR-type domain is found at 148 to 213 (TTDPFKILSK…ELVEYALKKK (66 aa)). Residues 172 to 191 (NKEIAEKLFVSVKTVEAHKT) constitute a DNA-binding region (H-T-H motif).

In terms of processing, phosphorylated by NreB.

Its subcellular location is the cytoplasm. Member of the two-component regulatory system NreB/NreC involved in the control of dissimilatory nitrate/nitrite reduction in response to oxygen. Phosphorylated NreC binds to a GC-rich palindromic sequence at the promoters of the nitrate (narGHJI) and nitrite (nir) reductase operons, as well as the putative nitrate transporter gene narT, and activates their expression. This chain is Oxygen regulatory protein NreC (nreC), found in Staphylococcus aureus (strain USA300 / TCH1516).